Consider the following 181-residue polypeptide: Ubiquitin-conjugating enzyme E2 19 (181 aa).

The span at 1–10 (MATVNGYTGN) shows a compositional bias: polar residues. Positions 1-33 (MATVNGYTGNTPAATTPAATGSKQSAPPTKTVD) are disordered. Low complexity predominate over residues 11 to 20 (TPAATTPAAT). In terms of domain architecture, UBC core spans 36–181 (SVLKRLQSEL…VEKLYKPLNA (146 aa)). Cys-120 serves as the catalytic Glycyl thioester intermediate.

The protein belongs to the ubiquitin-conjugating enzyme family. Interacts with OR. Binds to LOT1. Expressed in all tissues with cell division activities and in mature leaves.

Its subcellular location is the cytoplasm. The protein localises to the nucleus. It carries out the reaction S-ubiquitinyl-[E1 ubiquitin-activating enzyme]-L-cysteine + [E2 ubiquitin-conjugating enzyme]-L-cysteine = [E1 ubiquitin-activating enzyme]-L-cysteine + S-ubiquitinyl-[E2 ubiquitin-conjugating enzyme]-L-cysteine.. Its pathway is protein modification; protein ubiquitination. In terms of biological role, accepts the ubiquitin from the E1 complex and catalyzes its covalent attachment to other proteins. Part of the anaphase-promoting complex (APC). May have a key function during cell cycle and be involved in cyclin B1 degradation. Triggers OR ubiquitination that mediates its subsequent nuclear localization. Involved in the repression of early light-induced proteins (ELIPs, e.g. ELIP1 and ELIP2) expression, probably via OR nuclear relocalization. This chain is Ubiquitin-conjugating enzyme E2 19, found in Arabidopsis thaliana (Mouse-ear cress).